The sequence spans 162 residues: Peptide deformylase (162 aa).

The Fe cation site is built by Cys91 and His133. Glu134 is an active-site residue. His137 is a binding site for Fe cation.

Belongs to the polypeptide deformylase family. Fe(2+) serves as cofactor.

It carries out the reaction N-terminal N-formyl-L-methionyl-[peptide] + H2O = N-terminal L-methionyl-[peptide] + formate. Its function is as follows. Removes the formyl group from the N-terminal Met of newly synthesized proteins. Requires at least a dipeptide for an efficient rate of reaction. N-terminal L-methionine is a prerequisite for activity but the enzyme has broad specificity at other positions. This is Peptide deformylase from Finegoldia magna (strain ATCC 29328 / DSM 20472 / WAL 2508) (Peptostreptococcus magnus).